The sequence spans 199 residues: Fe/S biogenesis protein NfuA (199 aa).

[4Fe-4S] cluster is bound by residues cysteine 156 and cysteine 159.

Belongs to the NfuA family. In terms of assembly, homodimer. [4Fe-4S] cluster is required as a cofactor.

Its function is as follows. Involved in iron-sulfur cluster biogenesis. Binds a 4Fe-4S cluster, can transfer this cluster to apoproteins, and thereby intervenes in the maturation of Fe/S proteins. Could also act as a scaffold/chaperone for damaged Fe/S proteins. The protein is Fe/S biogenesis protein NfuA of Haemophilus ducreyi (strain 35000HP / ATCC 700724).